We begin with the raw amino-acid sequence, 487 residues long: NGFI-A-binding protein 1 (487 aa).

Positions 4 to 82 (ALPRTLGELQ…RDWVTNPGLF (79 aa)) are NCD1. Residues lysine 126, lysine 129, and lysine 143 each participate in a glycyl lysine isopeptide (Lys-Gly) (interchain with G-Cter in SUMO2) cross-link. The interval 162 to 188 (QGHHATESEHSLSPADLGSPASPKESS) is disordered. A phosphoserine mark is found at serine 172 and serine 183. Residue lysine 212 forms a Glycyl lysine isopeptide (Lys-Gly) (interchain with G-Cter in SUMO2) linkage. The NCD2 stretch occupies residues 221-310 (LLKTNKKLAK…ARQISREVTY (90 aa)). A necessary for nuclear localization region spans residues 307-338 (EVTYKYTYRTTKSKCGERDELSPKRIKVEDGF). A Phosphoserine modification is found at serine 328. Residue lysine 333 forms a Glycyl lysine isopeptide (Lys-Gly) (interchain with G-Cter in SUMO1); alternate linkage. Residue lysine 333 forms a Glycyl lysine isopeptide (Lys-Gly) (interchain with G-Cter in SUMO2); alternate linkage. Residues lysine 355, lysine 369, and lysine 373 each participate in a glycyl lysine isopeptide (Lys-Gly) (interchain with G-Cter in SUMO2) cross-link. The interval 399 to 434 (YRQSSEEHSPNGLTSDNSDGQGERPLNLRMPNLQNR) is disordered. Position 407 is a phosphoserine (serine 407). Residues 409–418 (NGLTSDNSDG) show a composition bias toward polar residues. Residues lysine 454, lysine 465, and lysine 477 each participate in a glycyl lysine isopeptide (Lys-Gly) (interchain with G-Cter in SUMO2) cross-link. A Glycyl lysine isopeptide (Lys-Gly) (interchain with G-Cter in SUMO1); alternate cross-link involves residue lysine 480. Lysine 480 is covalently cross-linked (Glycyl lysine isopeptide (Lys-Gly) (interchain with G-Cter in SUMO2); alternate).

This sequence belongs to the NAB family. In terms of assembly, homomultimers may associate with EGR1 bound to DNA. In terms of tissue distribution, isoform Short is found in myeloid leukemia cell line KG-1.

Its subcellular location is the nucleus. Acts as a transcriptional repressor for zinc finger transcription factors EGR1 and EGR2. The sequence is that of NGFI-A-binding protein 1 (NAB1) from Homo sapiens (Human).